A 347-amino-acid polypeptide reads, in one-letter code: Dihydroorotate dehydrogenase (quinone) (347 aa).

FMN is bound by residues 65–69 and threonine 89; that span reads AGLDK. Lysine 69 serves as a coordination point for substrate. 114–118 is a binding site for substrate; that stretch reads NRMGF. FMN is bound by residues asparagine 146 and asparagine 179. Asparagine 179 lines the substrate pocket. Serine 182 functions as the Nucleophile in the catalytic mechanism. Substrate is bound at residue asparagine 184. The FMN site is built by lysine 224 and threonine 252. 253–254 lines the substrate pocket; sequence NT. FMN contacts are provided by residues glycine 275, glycine 304, and 325–326; that span reads YT.

The protein belongs to the dihydroorotate dehydrogenase family. Type 2 subfamily. As to quaternary structure, monomer. Requires FMN as cofactor.

Its subcellular location is the cell membrane. The catalysed reaction is (S)-dihydroorotate + a quinone = orotate + a quinol. Its pathway is pyrimidine metabolism; UMP biosynthesis via de novo pathway; orotate from (S)-dihydroorotate (quinone route): step 1/1. Its function is as follows. Catalyzes the conversion of dihydroorotate to orotate with quinone as electron acceptor. The chain is Dihydroorotate dehydrogenase (quinone) from Herminiimonas arsenicoxydans.